Reading from the N-terminus, the 334-residue chain is Trans-1,2-dihydrobenzene-1,2-diol dehydrogenase (334 aa).

The protein belongs to the Gfo/Idh/MocA family. In terms of assembly, homodimer.

The enzyme catalyses (1R,2R)-1,2-dihydrobenzene-1,2-diol + NADP(+) = catechol + NADPH + H(+). The catalysed reaction is D-xylose + NADP(+) = D-xylono-1,5-lactone + NADPH + H(+). The chain is Trans-1,2-dihydrobenzene-1,2-diol dehydrogenase (dhdh) from Danio rerio (Zebrafish).